Consider the following 61-residue polypeptide: Large ribosomal subunit protein uL30 (61 aa).

The protein belongs to the universal ribosomal protein uL30 family. In terms of assembly, part of the 50S ribosomal subunit.

The protein is Large ribosomal subunit protein uL30 of Frankia alni (strain DSM 45986 / CECT 9034 / ACN14a).